The chain runs to 78 residues: Beta-defensin 105A (78 aa).

The N-terminal stretch at 1-27 (MALIKKTFFFLFAMFFILVQLSSGCQA) is a signal peptide. 3 disulfide bridges follow: Cys43/Cys74, Cys53/Cys67, and Cys57/Cys73.

This sequence belongs to the beta-defensin family.

It is found in the secreted. In terms of biological role, has antimicrobial activity. This chain is Beta-defensin 105A (DEFB105A), found in Pan troglodytes (Chimpanzee).